Consider the following 384-residue polypeptide: DNA repair protein RAD51 homolog 2 (384 aa).

Residues 1 to 75 (MGSKKLKRVG…TAYGIKAQRS (75 aa)) form an interaction with RAD51C region. Residue 108 to 115 (GPPGCGKT) participates in ATP binding.

It belongs to the RecA family. RAD51 subfamily. Part of the BCDX2 complex consisting of RAD51B, RAD51C, RAD51D and XRCC2; the complex has a ring-like structure arranged into a flat disc around a central channel. The BCDX2 subcomplex RAD51B:RAD51C interacts with RAD51. Interacts with SWSAP1; involved in homologous recombination repair. Interacts with HELQ. Post-translationally, phosphorylated on tyrosine residues by BCR-ABL. Expressed in a wide range of tissues.

It is found in the nucleus. Involved in the homologous recombination repair (HRR) pathway of double-stranded DNA breaks arising during DNA replication or induced by DNA-damaging agents. May promote the assembly of presynaptic RAD51 nucleoprotein filaments. Binds single-stranded DNA and double-stranded DNA and has DNA-dependent ATPase activity. Part of the RAD51 paralog protein complex BCDX2 which acts in the BRCA1-BRCA2-dependent HR pathway. Upon DNA damage, BCDX2 acts downstream of BRCA2 recruitment and upstream of RAD51 recruitment. BCDX2 binds predominantly to the intersection of the four duplex arms of the Holliday junction and to junction of replication forks. The BCDX2 complex was originally reported to bind single-stranded DNA, single-stranded gaps in duplex DNA and specifically to nicks in duplex DNA. The BCDX2 subcomplex RAD51B:RAD51C exhibits single-stranded DNA-dependent ATPase activity suggesting an involvement in early stages of the HR pathway. The polypeptide is DNA repair protein RAD51 homolog 2 (RAD51B) (Homo sapiens (Human)).